The chain runs to 561 residues: Putative transport protein YbjL (561 aa).

5 helical membrane passes run 8 to 28, 32 to 52, 66 to 86, 94 to 114, and 158 to 178; these read LLNG…LCLG, LGSI…LLGQ, FMLF…SIFF, MLAL…GKLF, and NLSL…IVGA. RCK C-terminal domains follow at residues 202 to 288 and 292 to 373; these read LDTD…SFRN and VFDR…RIGF. Helical transmembrane passes span 383–403, 406–426, 451–471, 475–495, and 540–560; these read LLAF…TFQF, FSFG…LGFM, VFMA…LGAI, MLVA…LFGA, and AIAN…WPGL.

It belongs to the AAE transporter (TC 2.A.81) family. YbjL subfamily.

The protein localises to the cell membrane. The sequence is that of Putative transport protein YbjL from Escherichia fergusonii (strain ATCC 35469 / DSM 13698 / CCUG 18766 / IAM 14443 / JCM 21226 / LMG 7866 / NBRC 102419 / NCTC 12128 / CDC 0568-73).